Here is a 785-residue protein sequence, read N- to C-terminus: Peptide transporter family 2 (785 aa).

Helical transmembrane passes span 46–66 (FSFY…LNFS), 72–92 (VLFH…SILA), 99–119 (FWTI…LAFS), 134–154 (LLGL…VSAF), 167–187 (ISLF…ISMW), 208–228 (FGIP…GSFW), 303–323 (VIVM…QGST), 345–365 (MGVL…SIVY), and 382–402 (AGGG…QLFV). Residue Asn-467 is glycosylated (N-linked (GlcNAc...) asparagine). The next 3 membrane-spanning stretches (helical) occupy residues 670–690 (ILWQ…FSIT), 711–731 (WLFT…LNIF), and 738–758 (MFVF…LAVF).

Belongs to the major facilitator superfamily. Proton-dependent oligopeptide transporter (POT/PTR) (TC 2.A.17) family. Expressed in vulval, pharyngeal and anal muscles.

It localises to the membrane. Proton-dependent uptake of di- or tripeptides, and to a minor extent tetrapeptides. Transport is independent of sodium and chloride ions. Protein shows high affinity to peptide substrates. The protein is Peptide transporter family 2 (pept-2) of Caenorhabditis elegans.